The sequence spans 456 residues: IQ domain-containing protein IQM3 (456 aa).

The 30-residue stretch at Thr46–Glu75 folds into the IQ domain. The segment at Ser315–Gly358 is disordered.

Expressed in roots, rosette and cauline leaves, flowers and siliques, and at lower levels in stems.

Its subcellular location is the cytoplasm. It is found in the nucleus. May be involved in biotic and abiotic stress responses. This Arabidopsis thaliana (Mouse-ear cress) protein is IQ domain-containing protein IQM3.